A 477-amino-acid polypeptide reads, in one-letter code: Glycogen synthase (477 aa).

Lys-15 lines the ADP-alpha-D-glucose pocket.

Belongs to the glycosyltransferase 1 family. Bacterial/plant glycogen synthase subfamily.

The enzyme catalyses [(1-&gt;4)-alpha-D-glucosyl](n) + ADP-alpha-D-glucose = [(1-&gt;4)-alpha-D-glucosyl](n+1) + ADP + H(+). Its pathway is glycan biosynthesis; glycogen biosynthesis. Functionally, synthesizes alpha-1,4-glucan chains using ADP-glucose. The protein is Glycogen synthase of Shigella boydii serotype 18 (strain CDC 3083-94 / BS512).